Consider the following 375-residue polypeptide: Succinyl-diaminopimelate desuccinylase (375 aa).

Position 66 (H66) interacts with Zn(2+). Residue D68 is part of the active site. D99 is a binding site for Zn(2+). The Proton acceptor role is filled by E133. The Zn(2+) site is built by E134, E162, and H348.

It belongs to the peptidase M20A family. DapE subfamily. Homodimer. Requires Zn(2+) as cofactor. Co(2+) serves as cofactor.

It catalyses the reaction N-succinyl-(2S,6S)-2,6-diaminopimelate + H2O = (2S,6S)-2,6-diaminopimelate + succinate. The protein operates within amino-acid biosynthesis; L-lysine biosynthesis via DAP pathway; LL-2,6-diaminopimelate from (S)-tetrahydrodipicolinate (succinylase route): step 3/3. In terms of biological role, catalyzes the hydrolysis of N-succinyl-L,L-diaminopimelic acid (SDAP), forming succinate and LL-2,6-diaminopimelate (DAP), an intermediate involved in the bacterial biosynthesis of lysine and meso-diaminopimelic acid, an essential component of bacterial cell walls. This chain is Succinyl-diaminopimelate desuccinylase, found in Aeromonas hydrophila subsp. hydrophila (strain ATCC 7966 / DSM 30187 / BCRC 13018 / CCUG 14551 / JCM 1027 / KCTC 2358 / NCIMB 9240 / NCTC 8049).